The primary structure comprises 299 residues: Protease HtpX homolog (299 aa).

Helical transmembrane passes span 15–35 (ILLL…GYLF) and 39–59 (GLGG…SMIF). H143 lines the Zn(2+) pocket. The active site involves E144. H147 contributes to the Zn(2+) binding site. Helical transmembrane passes span 158 to 178 (IAVA…RMMW) and 198 to 218 (IIML…ATLV). A Zn(2+)-binding site is contributed by E227.

Belongs to the peptidase M48B family. Requires Zn(2+) as cofactor.

It is found in the cell membrane. This chain is Protease HtpX homolog, found in Streptococcus pneumoniae serotype 4 (strain ATCC BAA-334 / TIGR4).